A 409-amino-acid polypeptide reads, in one-letter code: MARAKFERNKPHVNIGTIGHVDHGKTTLTAAITMTLAALGQAAARKYDEIDAAPEEKARGITINTAHVEYETTQRHYAHVDCPGHADYVKNMITGAAQMDGAILVVAATDGAMPQTKEHILLAKQVGVPSIVVFLNKVDQLDDEELLELVELELRELLTSYDFDGDNIPIIRGSGLMALEAMTGNPKTQRGDNEWVDKIYELMDAVDSYIPTPERDVDKPFLMAVEDVFSITGRGTVATGRIERGKVKINDTVEVVGIRETRTTTVTGIEMFKKSLDEGMAGDNAGLLLRGLKKEDIERGMVLAKPGSITPHTEFEGEVYVLTEKEGGRKTPFFAGYRPQFYVRTTDVTGTIKSFTADDGSNAEMVMPGDRIKMNVELINPIAIEQGMRFAIREGGRTIGAGVVSKIVK.

The tr-type G domain occupies 10-214 (KPHVNIGTIG…AVDSYIPTPE (205 aa)). The tract at residues 19–26 (GHVDHGKT) is G1. 19 to 26 (GHVDHGKT) lines the GTP pocket. A Mg(2+)-binding site is contributed by Thr26. Residues 60–64 (GITIN) are G2. The segment at 81-84 (DCPG) is G3. GTP contacts are provided by residues 81–85 (DCPGH) and 136–139 (NKVD). Residues 136–139 (NKVD) are G4. Residues 174–176 (SGL) are G5.

The protein belongs to the TRAFAC class translation factor GTPase superfamily. Classic translation factor GTPase family. EF-Tu/EF-1A subfamily. As to quaternary structure, monomer.

It is found in the cytoplasm. The enzyme catalyses GTP + H2O = GDP + phosphate + H(+). Its function is as follows. GTP hydrolase that promotes the GTP-dependent binding of aminoacyl-tRNA to the A-site of ribosomes during protein biosynthesis. The chain is Elongation factor Tu from Cyanothece sp. (strain PCC 7425 / ATCC 29141).